Consider the following 124-residue polypeptide: Small ribosomal subunit protein eS6 (124 aa).

It belongs to the eukaryotic ribosomal protein eS6 family.

This Methanococcus maripaludis (strain C7 / ATCC BAA-1331) protein is Small ribosomal subunit protein eS6.